A 436-amino-acid polypeptide reads, in one-letter code: Trigger factor (436 aa).

Positions 164–249 (GDTVVIDFEG…IHEVKTKELP (86 aa)) constitute a PPIase FKBP-type domain.

It belongs to the FKBP-type PPIase family. Tig subfamily.

Its subcellular location is the cytoplasm. The catalysed reaction is [protein]-peptidylproline (omega=180) = [protein]-peptidylproline (omega=0). Involved in protein export. Acts as a chaperone by maintaining the newly synthesized protein in an open conformation. Functions as a peptidyl-prolyl cis-trans isomerase. The protein is Trigger factor of Ligilactobacillus salivarius (strain UCC118) (Lactobacillus salivarius).